A 361-amino-acid polypeptide reads, in one-letter code: G-protein coupled receptor 52 (361 aa).

Topologically, residues 1-44 (MNDSRWTEWRILNTSSGILNVSERHSCPLGFGHYSAVDVCIFET) are extracellular. Asparagine 2, asparagine 13, and asparagine 20 each carry an N-linked (GlcNAc...) asparagine glycan. Residues 45–65 (IVIVLLTFLIIAGNLTVIFVF) form a helical membrane-spanning segment. Residues 66–87 (HCAPLLHHYTTSYFIQTMAYAD) are Cytoplasmic-facing. A helical membrane pass occupies residues 88–108 (LFVGVSCLVPTLSLLHYSTGI). At 109–115 (HESLTCQ) the chain is on the extracellular side. Cysteine 114 and cysteine 193 are joined by a disulfide. The helical transmembrane segment at 116–136 (VFGYIISVLKSVSMACLACIS) threads the bilayer. The Cytoplasmic segment spans residues 137 to 159 (VDRYLAITKPLSYNQLVTPCRLR). Residues 160-180 (ICIILIWIYSCLIFLPSFFGW) traverse the membrane as a helical segment. At 181 to 200 (GKPGYHGDIFEWCATSWLTS) the chain is on the extracellular side. Residues 201-221 (AYFTGFIVCLLYAPAALVVCF) form a helical membrane-spanning segment. The Cytoplasmic segment spans residues 222–265 (TYFHIFKICRQHTKEINDRRARFPSHEAAASRDAGHSPDRRYAM). The chain crosses the membrane as a helical span at residues 266 to 286 (VLFRITSVFYMLWLPYIIYFL). The Extracellular portion of the chain corresponds to 287-296 (LESSRVLDNP). A helical transmembrane segment spans residues 297–317 (TLSFLTTWLAISNSFCNCVIY). The Cytoplasmic portion of the chain corresponds to 318 to 361 (SLSNSVFRLGLRRLSETMCTSCMCVKDKEARDPKPRKRANSCSI).

It belongs to the G-protein coupled receptor 1 family.

Its subcellular location is the cell membrane. In terms of biological role, G- protein coupled receptor activated by antipsychotics reserpine leading to an increase in intracellular cAMP and its internalization. May play a role in locomotor activity through modulation of dopamine, NMDA and ADORA2A-induced locomotor activity. These behavioral changes are accompanied by modulation of the dopamine receptor signaling pathway in striatum. Modulates HTT level via cAMP-dependent but PKA independent mechanisms throught activation of RAB39B that translocates HTT to the endoplasmic reticulum, thus avoiding proteasome degradation. This is G-protein coupled receptor 52 from Bos taurus (Bovine).